We begin with the raw amino-acid sequence, 235 residues long: Ribonuclease 3 (235 aa).

Residues 7 to 135 (FAALEARLGH…VVAAVYLDGG (129 aa)) form the RNase III domain. Mg(2+) is bound at residue glutamate 48. Aspartate 52 is an active-site residue. Mg(2+)-binding residues include aspartate 121 and glutamate 124. Residue glutamate 124 is part of the active site. The DRBM domain occupies 160–229 (DPKTVLQEWA…ASAFLAREGV (70 aa)).

It belongs to the ribonuclease III family. Homodimer. It depends on Mg(2+) as a cofactor.

The protein resides in the cytoplasm. It carries out the reaction Endonucleolytic cleavage to 5'-phosphomonoester.. In terms of biological role, digests double-stranded RNA. Involved in the processing of primary rRNA transcript to yield the immediate precursors to the large and small rRNAs (23S and 16S). Processes some mRNAs, and tRNAs when they are encoded in the rRNA operon. Processes pre-crRNA and tracrRNA of type II CRISPR loci if present in the organism. The sequence is that of Ribonuclease 3 from Azorhizobium caulinodans (strain ATCC 43989 / DSM 5975 / JCM 20966 / LMG 6465 / NBRC 14845 / NCIMB 13405 / ORS 571).